The primary structure comprises 53 residues: ATP synthase protein 8 (53 aa).

The helical transmembrane segment at 9 to 29 (WLILFFIFSITLVIFNILNYF) threads the bilayer.

The protein belongs to the ATPase protein 8 family. F-type ATPases have 2 components, CF(1) - the catalytic core - and CF(0) - the membrane proton channel.

It is found in the mitochondrion membrane. Mitochondrial membrane ATP synthase (F(1)F(0) ATP synthase or Complex V) produces ATP from ADP in the presence of a proton gradient across the membrane which is generated by electron transport complexes of the respiratory chain. F-type ATPases consist of two structural domains, F(1) - containing the extramembraneous catalytic core and F(0) - containing the membrane proton channel, linked together by a central stalk and a peripheral stalk. During catalysis, ATP synthesis in the catalytic domain of F(1) is coupled via a rotary mechanism of the central stalk subunits to proton translocation. Part of the complex F(0) domain. Minor subunit located with subunit a in the membrane. This is ATP synthase protein 8 (mt:ATPase8) from Anopheles quadrimaculatus (Common malaria mosquito).